The chain runs to 81 residues: Keratin-associated protein 19-3 (81 aa).

It belongs to the KRTAP type 19 family. As to quaternary structure, interacts with hair keratins.

In the hair cortex, hair keratin intermediate filaments are embedded in an interfilamentous matrix, consisting of hair keratin-associated proteins (KRTAP), which are essential for the formation of a rigid and resistant hair shaft through their extensive disulfide bond cross-linking with abundant cysteine residues of hair keratins. The matrix proteins include the high-sulfur and high-glycine-tyrosine keratins. This is Keratin-associated protein 19-3 (KRTAP19-3) from Homo sapiens (Human).